The sequence spans 405 residues: S-arrestin (405 aa).

Thr234 is modified (phosphothreonine).

Belongs to the arrestin family. Monomer. Homodimer. Homotetramer. Interacts with RHO (via the phosphorylated C-terminus). In terms of tissue distribution, detected in retina, in the proximal portion of the outer segment of rod photoreceptor cells (at protein level).

Its subcellular location is the cell projection. It is found in the cilium. It localises to the photoreceptor outer segment. The protein resides in the membrane. Binds to photoactivated, phosphorylated RHO and terminates RHO signaling via G-proteins by competing with G-proteins for the same binding site on RHO. May play a role in preventing light-dependent degeneration of retinal photoreceptor cells. The chain is S-arrestin (SAG) from Homo sapiens (Human).